The primary structure comprises 209 residues: Large ribosomal subunit protein uL3 (209 aa).

The segment at 133-153 is disordered; it reads THGNSLSHRAPGSIGQNQTPG. The residue at position 150 (Q150) is an N5-methylglutamine.

Belongs to the universal ribosomal protein uL3 family. In terms of assembly, part of the 50S ribosomal subunit. Forms a cluster with proteins L14 and L19. Methylated by PrmB.

Its function is as follows. One of the primary rRNA binding proteins, it binds directly near the 3'-end of the 23S rRNA, where it nucleates assembly of the 50S subunit. In Pectobacterium atrosepticum (strain SCRI 1043 / ATCC BAA-672) (Erwinia carotovora subsp. atroseptica), this protein is Large ribosomal subunit protein uL3.